We begin with the raw amino-acid sequence, 594 residues long: Tripeptidyl-peptidase sed4 (594 aa).

Residues 1–20 form the signal peptide; it reads MLSSTLYAGWLLSLAAPALC. The propeptide at 21 to 187 is removed in mature form; that stretch reads VVQEKLSAVP…AVKLPALPRR (167 aa). 3 N-linked (GlcNAc...) asparagine glycosylation sites follow: asparagine 191, asparagine 229, and asparagine 250. Residues 197–594 enclose the Peptidase S53 domain; that stretch reads LITPDCLVEM…MKLKELVLSL (398 aa). Catalysis depends on charge relay system residues glutamate 272, aspartate 276, and serine 494. Ca(2+)-binding residues include aspartate 536 and isoleucine 537. An N-linked (GlcNAc...) asparagine glycan is attached at asparagine 568. Ca(2+) contacts are provided by glycine 572 and aspartate 574.

Requires Ca(2+) as cofactor. Post-translationally, N-glycosylated.

It localises to the secreted. The protein resides in the extracellular space. The enzyme catalyses Release of an N-terminal tripeptide from a polypeptide.. In terms of biological role, secreted tripeptidyl-peptidase which degrades proteins at acidic pHs and is involved in virulence. In Aspergillus fumigatus (strain ATCC MYA-4609 / CBS 101355 / FGSC A1100 / Af293) (Neosartorya fumigata), this protein is Tripeptidyl-peptidase sed4 (sed4).